Consider the following 77-residue polypeptide: Conotoxin Vc6.14 (77 aa).

The signal sequence occupies residues 1 to 19; sequence MEKLTILLLVAAVLMSTQA. Residues 20-37 constitute a propeptide that is removed on maturation; the sequence is MFQGGGEKRPKDKIKFLS. Cystine bridges form between Cys-51–Cys-65, Cys-58–Cys-69, and Cys-64–Cys-74.

Belongs to the conotoxin O2 superfamily. Expressed by the venom duct.

The protein resides in the secreted. Its function is as follows. Inhibits voltage-gated ion channels. This chain is Conotoxin Vc6.14, found in Conus victoriae (Queen Victoria cone).